Reading from the N-terminus, the 166-residue chain is Glycine-rich RNA-binding protein GRP1A (166 aa).

Residues 8–86 enclose the RRM domain; that stretch reads YRCFVGGLAW…RSITVNEAQS (79 aa). The disordered stretch occupies residues 68 to 166; the sequence is GMNGQDLDGR…YGGSGGGGGW (99 aa). Composition is skewed to gly residues over residues 88-146 and 153-166; these read GSGG…YGGG and EGGG…GGGW.

In terms of tissue distribution, predominantly expressed in meristematic and growing tissue.

Its subcellular location is the nucleus. In terms of biological role, may play a general role in circadian phenomena associated with meristematic tissue. The chain is Glycine-rich RNA-binding protein GRP1A from Sinapis alba (White mustard).